We begin with the raw amino-acid sequence, 798 residues long: Penicillin-binding protein 1A (798 aa).

Residues 2-9 lie on the Cytoplasmic side of the membrane; the sequence is IKKILTTC. A helical; Signal-anchor for type II membrane protein transmembrane segment spans residues 10 to 30; that stretch reads FGLFFGFCVFGVGLVAIAILV. Residues 31 to 798 lie on the Periplasmic side of the membrane; it reads TYPKLPSLDS…SKQQQLDSLF (768 aa). A transglycosylase region spans residues 50–218; that stretch reads LTIYSADGEV…SAYNPIVNPE (169 aa). The Proton donor; for transglycosylase activity role is filled by Glu-88. The segment at 378–700 is transpeptidase; that stretch reads RRALGFAARA…GTIAVPVWVD (323 aa). Ser-461 functions as the Acyl-ester intermediate; for transpeptidase activity in the catalytic mechanism. Residues 739–798 are disordered; that stretch reads LMLDNSGIAPQPSRRAKEDDEAAVENEQQGRSDETRQDVQETPVLPSNTDSKQQQLDSLF. The segment covering 766-777 has biased composition (basic and acidic residues); it reads QQGRSDETRQDV. Over residues 783 to 798 the composition is skewed to polar residues; it reads LPSNTDSKQQQLDSLF.

In the N-terminal section; belongs to the glycosyltransferase 51 family. This sequence in the C-terminal section; belongs to the transpeptidase family.

Its subcellular location is the cell inner membrane. It carries out the reaction [GlcNAc-(1-&gt;4)-Mur2Ac(oyl-L-Ala-gamma-D-Glu-L-Lys-D-Ala-D-Ala)](n)-di-trans,octa-cis-undecaprenyl diphosphate + beta-D-GlcNAc-(1-&gt;4)-Mur2Ac(oyl-L-Ala-gamma-D-Glu-L-Lys-D-Ala-D-Ala)-di-trans,octa-cis-undecaprenyl diphosphate = [GlcNAc-(1-&gt;4)-Mur2Ac(oyl-L-Ala-gamma-D-Glu-L-Lys-D-Ala-D-Ala)](n+1)-di-trans,octa-cis-undecaprenyl diphosphate + di-trans,octa-cis-undecaprenyl diphosphate + H(+). The catalysed reaction is Preferential cleavage: (Ac)2-L-Lys-D-Ala-|-D-Ala. Also transpeptidation of peptidyl-alanyl moieties that are N-acyl substituents of D-alanine.. Its pathway is cell wall biogenesis; peptidoglycan biosynthesis. Functionally, cell wall formation. Synthesis of cross-linked peptidoglycan from the lipid intermediates. The enzyme has a penicillin-insensitive transglycosylase N-terminal domain (formation of linear glycan strands) and a penicillin-sensitive transpeptidase C-terminal domain (cross-linking of the peptide subunits). Essential for cell wall synthesis. In Neisseria gonorrhoeae (strain ATCC 700825 / FA 1090), this protein is Penicillin-binding protein 1A (mrcA).